A 269-amino-acid chain; its full sequence is Putative hydro-lyase Aave_3512 (269 aa).

Belongs to the D-glutamate cyclase family.

This Paracidovorax citrulli (strain AAC00-1) (Acidovorax citrulli) protein is Putative hydro-lyase Aave_3512.